Reading from the N-terminus, the 110-residue chain is Large ribosomal subunit protein uL24 (110 aa).

This sequence belongs to the universal ribosomal protein uL24 family. Part of the 50S ribosomal subunit.

One of two assembly initiator proteins, it binds directly to the 5'-end of the 23S rRNA, where it nucleates assembly of the 50S subunit. Functionally, one of the proteins that surrounds the polypeptide exit tunnel on the outside of the subunit. The protein is Large ribosomal subunit protein uL24 of Chloroflexus aggregans (strain MD-66 / DSM 9485).